The sequence spans 216 residues: Redox-sensing transcriptional repressor Rex (216 aa).

The H-T-H motif DNA-binding region spans 17–56; that stretch reads IYFRYLTFLHDAGTDRISSAELSDAIKFDAATIRRDFSYF. Position 91-96 (91-96) interacts with NAD(+); it reads GAGNLG.

Belongs to the transcriptional regulatory Rex family. Homodimer.

Its subcellular location is the cytoplasm. Functionally, modulates transcription in response to changes in cellular NADH/NAD(+) redox state. The sequence is that of Redox-sensing transcriptional repressor Rex from Leuconostoc citreum (strain KM20).